We begin with the raw amino-acid sequence, 694 residues long: N,N-dimethylglycine/sarcosine dehydrogenase (694 aa).

The protein in the N-terminal section; belongs to the NADH:flavin oxidoreductase/NADH oxidase family. As to quaternary structure, monomer. The purified enzyme exists in the form of a monomer, dimer or polymer under non-denaturing conditions, but only the monomeric protein exhibits enzyme activity. It depends on FAD as a cofactor. NAD(+) is required as a cofactor. Requires NADP(+) as cofactor.

The protein localises to the cytoplasm. The enzyme catalyses oxidized 2[4Fe-4S]-[ferredoxin] + N,N-dimethylglycine + H2O = reduced 2[4Fe-4S]-[ferredoxin] + sarcosine + formaldehyde + 2 H(+). It carries out the reaction oxidized 2[4Fe-4S]-[ferredoxin] + sarcosine + H2O = reduced 2[4Fe-4S]-[ferredoxin] + formaldehyde + glycine + 2 H(+). With respect to regulation, ca(2+) increases the activity by 12%, while the other metal ions tested have no or slightly inhibitory effects. The chelating agent EDTA inhibits the activity by 33%. Functionally, involved in degradation of glycine betaine. Catalyzes the demethylation of both N,N-dimethylglycine (DMG) and sarcosine, releasing formaldehyde and forming glycine as the final product. Does not show activity toward trimethylamine (TMA), histamine, glycine betaine (GB) or choline. The C-N bond in DMG is probably oxidized by removal of a hydride equivalent to form a labile imine intermediate, which is then spontaneously hydrolyzed in the presence of water, producing sarcosine and formaldehyde. The two protons subtracted from DMG are transferred to the non-covalently bound FAD, resulting in the reduced form of FAD, which is subsequently reoxidized by coupling with reduction of the enzyme-bound NAD(P)(+). Regeneration of NAD(P)(+) is achieved by electron transfer to the [4Fe-4S] cluster in the probable membrane-anchored ferredoxin csal_0991. In Chromohalobacter salexigens (strain ATCC BAA-138 / DSM 3043 / CIP 106854 / NCIMB 13768 / 1H11), this protein is N,N-dimethylglycine/sarcosine dehydrogenase.